A 392-amino-acid polypeptide reads, in one-letter code: Phospho-N-acetylmuramoyl-pentapeptide-transferase (392 aa).

Transmembrane regions (helical) follow at residues 29 to 49, 76 to 96, 100 to 120, 137 to 157, 192 to 212, 225 to 245, 262 to 282, 289 to 309, 314 to 334, and 369 to 389; these read AVLA…WVIG, TMGG…WFDL, FVWI…VDDW, YLWQ…CISE, AVSY…VIVG, GLAI…AYVT, SGEL…FLWF, VFMG…IAII, IVLA…MLQV, and QVVV…LSTL.

The protein belongs to the glycosyltransferase 4 family. MraY subfamily. Requires Mg(2+) as cofactor.

The protein localises to the cell inner membrane. It carries out the reaction UDP-N-acetyl-alpha-D-muramoyl-L-alanyl-gamma-D-glutamyl-meso-2,6-diaminopimeloyl-D-alanyl-D-alanine + di-trans,octa-cis-undecaprenyl phosphate = di-trans,octa-cis-undecaprenyl diphospho-N-acetyl-alpha-D-muramoyl-L-alanyl-D-glutamyl-meso-2,6-diaminopimeloyl-D-alanyl-D-alanine + UMP. It participates in cell wall biogenesis; peptidoglycan biosynthesis. Its function is as follows. Catalyzes the initial step of the lipid cycle reactions in the biosynthesis of the cell wall peptidoglycan: transfers peptidoglycan precursor phospho-MurNAc-pentapeptide from UDP-MurNAc-pentapeptide onto the lipid carrier undecaprenyl phosphate, yielding undecaprenyl-pyrophosphoryl-MurNAc-pentapeptide, known as lipid I. The polypeptide is Phospho-N-acetylmuramoyl-pentapeptide-transferase (Verminephrobacter eiseniae (strain EF01-2)).